The following is a 310-amino-acid chain: E3 ubiquitin-protein ligase AIP2 (310 aa).

Residues 230–271 (CCICKENLVIGDKMQELPCKHTFHPPCLKPWLDEHNSCPICR) form an RING-type; atypical zinc finger. The stretch at 276 to 306 (TDDQKYENWKEREKEAEEERKGAENAVRGGE) forms a coiled coil. Over residues 285-298 (KEREKEAEEERKGA) the composition is skewed to basic and acidic residues. A disordered region spans residues 285-310 (KEREKEAEEERKGAENAVRGGEYMYV).

As to quaternary structure, interacts with ABI3 (via C-terminus). In terms of processing, auto-ubiquitinated. As to expression, highly expressed in leaves and at lower levels in flowers and seeds.

Its subcellular location is the nucleus. The protein localises to the cytoplasm. It catalyses the reaction S-ubiquitinyl-[E2 ubiquitin-conjugating enzyme]-L-cysteine + [acceptor protein]-L-lysine = [E2 ubiquitin-conjugating enzyme]-L-cysteine + N(6)-ubiquitinyl-[acceptor protein]-L-lysine.. The protein operates within protein modification; protein ubiquitination. In terms of biological role, E3 ubiquitin-protein ligase that acts as a negative regulator of abscisic acid (ABA) signaling. Mediates ubiquitination and subsequent proteasomal degradation of the transcription factor ABI3. This Arabidopsis thaliana (Mouse-ear cress) protein is E3 ubiquitin-protein ligase AIP2 (AIP2).